A 1189-amino-acid polypeptide reads, in one-letter code: Origin recognition complex subunit 1 (1189 aa).

A required for peripherial nuclear localization region spans residues 1–53 (MTPKKKIFQNFQANDNEILSPTKKGIKLNVSKLNILNFENTIITKEKTNYEYK). Thr2 carries the post-translational modification Phosphothreonine. Position 20 is a phosphoserine (Ser20). Leucine heptad repeat repeat units lie at residues 137–143 (LTNISSS), 144–150 (LTNISSS), 151–157 (LTNISSS), and 158–164 (LSNSLDE). A compositionally biased stretch (basic residues) spans 239–248 (KKNISKKNTH). Disordered regions lie at residues 239-421 (KKNI…DHTD) and 679-749 (DTQA…QSSL). A compositionally biased stretch (basic and acidic residues) spans 254–279 (QNDKNKEKNKEKDKNIKKDRDKDIQT). Residues 304-320 (NNDNVKNNLKNNINNNN) show a composition bias toward low complexity. Residues 321-339 (TLKRSSQSVRIDSDLSSAH) show a composition bias toward polar residues. Positions 353–381 (HRNNNNNNNNNNKTTSNNHNKNNKINNNN) are enriched in low complexity. Over residues 385-394 (NYKKQTDTKH) the composition is skewed to basic and acidic residues. Residues 395–411 (TNNTQNNKYNKTKTTNT) are compositionally biased toward low complexity. Positions 695 to 709 (KAQTTTNVKANTHTK) are enriched in polar residues. 2 stretches are compositionally biased toward basic and acidic residues: residues 710–724 (TLND…KNKE) and 733–742 (DVKKKSDPHN). ATP is bound by residues Val780 and 815–823 (GMPGTGKTA). Mg(2+) is bound by residues Asp903 and Glu904. Glu904 lines the ATP pocket. The PIP-box motif lies at 913-922 (QKVLFTLFDW). ATP contacts are provided by Asn937 and Arg1003.

This sequence belongs to the ORC1 family. As to quaternary structure, component of the origin recognition complex (ORC). Interacts (via PIP-box) with PCNA1; the interaction occurs during DNA replication in trophozoites. In schizonts, may be phosphorylated by PK5; phosphorylation leads to ORC1 dissociation from the telomeres and var gene promoters, translocation to the cytoplasm, where it is degraded by the proteasome.

The protein resides in the nucleus. Its subcellular location is the chromosome. It localises to the telomere. It is found in the nucleolus. It catalyses the reaction ATP + H2O = ADP + phosphate + H(+). Its function is as follows. Component of the origin recognition complex (ORC) that binds origins of replication and thus may regulate the initiation of DNA replication. DNA-binding may not be ATP-dependent. In a SIR2A/Sir2-dependent manner, binds to and silences telomers and subtelomeric repeat regions (TAREs). In a SIR2A/Sir2-dependent manner, binds to promoters of var genes localized next to TAREs resulting in their silencing. The polypeptide is Origin recognition complex subunit 1 (Plasmodium falciparum (isolate 3D7)).